The primary structure comprises 91 residues: Acylphosphatase (91 aa).

Residues 5-91 (CSKFIVSGHV…EHDYQGFEIL (87 aa)) form the Acylphosphatase-like domain. Asn38 is a catalytic residue.

Belongs to the acylphosphatase family.

The enzyme catalyses an acyl phosphate + H2O = a carboxylate + phosphate + H(+). This chain is Acylphosphatase (acyP), found in Vibrio cholerae serotype O1 (strain ATCC 39541 / Classical Ogawa 395 / O395).